Consider the following 522-residue polypeptide: Transactivator/viroplasmin protein (522 aa).

The tract at residues 488 to 522 is disordered; that stretch reads DASADEGTTDKSGPPPTRSIVEKEDVPNTSSKQVD.

Belongs to the caulimoviridae viroplasmin family.

The protein resides in the host cytoplasm. Functionally, enhances the ribosomal termination-reinitiation event leading to the translation of major open reading frames on the polycistronic viral RNAs. In Cauliflower mosaic virus (strain D/H) (CaMV), this protein is Transactivator/viroplasmin protein.